The following is a 248-amino-acid chain: ATP synthase subunit a (248 aa).

Transmembrane regions (helical) follow at residues G31 to G51, V90 to F110, I129 to S149, V195 to F215, and L216 to E236.

It belongs to the ATPase A chain family. As to quaternary structure, F-type ATPases have 2 components, CF(1) - the catalytic core - and CF(0) - the membrane proton channel. CF(1) has five subunits: alpha(3), beta(3), gamma(1), delta(1), epsilon(1). CF(0) has four main subunits: a, b, b' and c.

The protein resides in the cellular thylakoid membrane. Key component of the proton channel; it plays a direct role in the translocation of protons across the membrane. The sequence is that of ATP synthase subunit a from Synechococcus sp. (strain JA-3-3Ab) (Cyanobacteria bacterium Yellowstone A-Prime).